The chain runs to 158 residues: SsrA-binding protein (158 aa).

The span at 133–147 shows a compositional bias: basic and acidic residues; the sequence is KRQALRERQDNREAQ. Positions 133-158 are disordered; it reads KRQALRERQDNREAQRAMASRKHLGE.

It belongs to the SmpB family.

Its subcellular location is the cytoplasm. In terms of biological role, required for rescue of stalled ribosomes mediated by trans-translation. Binds to transfer-messenger RNA (tmRNA), required for stable association of tmRNA with ribosomes. tmRNA and SmpB together mimic tRNA shape, replacing the anticodon stem-loop with SmpB. tmRNA is encoded by the ssrA gene; the 2 termini fold to resemble tRNA(Ala) and it encodes a 'tag peptide', a short internal open reading frame. During trans-translation Ala-aminoacylated tmRNA acts like a tRNA, entering the A-site of stalled ribosomes, displacing the stalled mRNA. The ribosome then switches to translate the ORF on the tmRNA; the nascent peptide is terminated with the 'tag peptide' encoded by the tmRNA and targeted for degradation. The ribosome is freed to recommence translation, which seems to be the essential function of trans-translation. The chain is SsrA-binding protein from Leifsonia xyli subsp. xyli (strain CTCB07).